The following is a 241-amino-acid chain: Tetrahydromethanopterin S-methyltransferase subunit A (241 aa).

The Cytoplasmic portion of the chain corresponds to 1-220 (MANKREPAPG…AKWQAGYYNG (220 aa)). Residue histidine 85 participates in 5-hydroxybenzimidazolylcob(I)amide binding. Residues 221 to 241 (KIQGIATGLFLMLLIMGILMF) form a helical membrane-spanning segment.

This sequence belongs to the MtrA family. As to quaternary structure, the complex is composed of 8 subunits; MtrA, MtrB, MtrC, MtrD, MtrE, MtrF, MtrG and MtrH. 5-hydroxybenzimidazolylcob(I)amide is required as a cofactor.

It localises to the cell membrane. The catalysed reaction is 5-methyl-5,6,7,8-tetrahydromethanopterin + coenzyme M + 2 Na(+)(in) = 5,6,7,8-tetrahydromethanopterin + methyl-coenzyme M + 2 Na(+)(out). Its pathway is one-carbon metabolism; methanogenesis from CO(2); methyl-coenzyme M from 5,10-methylene-5,6,7,8-tetrahydromethanopterin: step 2/2. Part of a complex that catalyzes the formation of methyl-coenzyme M and tetrahydromethanopterin from coenzyme M and methyl-tetrahydromethanopterin. This is an energy-conserving, sodium-ion translocating step. The protein is Tetrahydromethanopterin S-methyltransferase subunit A of Methanocaldococcus jannaschii (strain ATCC 43067 / DSM 2661 / JAL-1 / JCM 10045 / NBRC 100440) (Methanococcus jannaschii).